We begin with the raw amino-acid sequence, 207 residues long: Ubiquitin-conjugating enzyme E2 E3 (207 aa).

Residues 1–10 are compositionally biased toward basic and acidic residues; sequence MSSDRQRSDD. The segment at 1 to 63 is disordered; that stretch reads MSSDRQRSDD…KTTAKLSTSA (63 aa). Residue S2 is modified to N-acetylserine. A Phosphoserine modification is found at S8. Positions 50–63 are enriched in low complexity; that stretch reads KLSSKTTAKLSTSA. One can recognise a UBC core domain in the interval 61–207; sequence TSAKRIQKEL…ARQWTKRYAT (147 aa). Catalysis depends on C145, which acts as the Glycyl thioester intermediate.

It belongs to the ubiquitin-conjugating enzyme family. As to quaternary structure, the ubiquitin-loaded form interacts specifically with importin-11 (IPO11), leading to its import into the nucleus. Interacts with NEDD4L.

Its subcellular location is the nucleus. It localises to the cytoplasm. The catalysed reaction is S-ubiquitinyl-[E1 ubiquitin-activating enzyme]-L-cysteine + [E2 ubiquitin-conjugating enzyme]-L-cysteine = [E1 ubiquitin-activating enzyme]-L-cysteine + S-ubiquitinyl-[E2 ubiquitin-conjugating enzyme]-L-cysteine.. It functions in the pathway protein modification; protein ubiquitination. Its function is as follows. Accepts ubiquitin from the E1 complex and catalyzes its covalent attachment to other proteins. In vitro catalyzes 'Lys-11'- and 'Lys-48'-, as well as 'Lys-63'-linked polyubiquitination. Participates in the regulation of transepithelial sodium transport in renal cells. This chain is Ubiquitin-conjugating enzyme E2 E3 (UBE2E3), found in Bos taurus (Bovine).